Consider the following 328-residue polypeptide: Cytochrome c biogenesis protein CcsA (328 aa).

The next 8 membrane-spanning stretches (helical) occupy residues 13–33 (ISFS…LVNL), 46–66 (GIII…IYSG), 73–93 (LYES…VSYF), 101–121 (LNTI…SGLL), 146–166 (MILG…LLVI), 234–254 (IISL…VWAN), 263–283 (WDPK…YLHI), and 295–315 (AIVA…VNLL).

The protein belongs to the CcmF/CycK/Ccl1/NrfE/CcsA family. May interact with Ccs1.

The protein resides in the plastid. The protein localises to the chloroplast thylakoid membrane. Required during biogenesis of c-type cytochromes (cytochrome c6 and cytochrome f) at the step of heme attachment. This Arabidopsis thaliana (Mouse-ear cress) protein is Cytochrome c biogenesis protein CcsA.